The following is a 540-amino-acid chain: MSKEIKFSSDARSAMVRGVDILADTVKVTLGPKGRNVVLEKSFGSPLITNDGVTIAKEIELEDHFENMGAKLVSEVASKTNDIAGDGTTTATVLTQAIVREGIKNVTAGANPIGIRRGIETAVAAAVEALKNNAIPVANKEAIAQVAAVSSRSEKVGEYISEAMEKVGKDGVITIEESRGMETELEVVEGMQFDRGYLSQYMVTDSEKMVADLENPYILITDKKISNIQEILPLLESILQSNRPLLIIADDVDGEALPTLVLNKIRGTFNVVAVKAPGFGDRRKAMLEDIAILTGGTVITEDLGLELKDATIEALGQAARVTVDKDSTVIVEGAGNPEAISHRVAVIKSQIETTTSEFDREKLQERLAKLSGGVAVIKVGAATETELKEMKLRIEDALNATRAAVEEGIVAGGGTALANVIPAVATLELTGDEATGRNIVLRALEEPVRQIAHNAGFEGSIVIDRLKNAELGIGFNAATGEWVNMIDQGIIDPVKVSRSALQNAASVASLILTTEAVVANKPEPVAPAPAMDPSMMGGMM.

ATP-binding positions include 29–32, 86–90, G413, 476–478, and D492; these read TLGP, DGTTT, and NAA.

It belongs to the chaperonin (HSP60) family. As to quaternary structure, forms a cylinder of 14 subunits composed of two heptameric rings stacked back-to-back. Interacts with the co-chaperonin GroES.

It is found in the cytoplasm. The catalysed reaction is ATP + H2O + a folded polypeptide = ADP + phosphate + an unfolded polypeptide.. Functionally, together with its co-chaperonin GroES, plays an essential role in assisting protein folding. The GroEL-GroES system forms a nano-cage that allows encapsulation of the non-native substrate proteins and provides a physical environment optimized to promote and accelerate protein folding. The chain is Chaperonin GroEL from Streptococcus pneumoniae (strain ATCC 700669 / Spain 23F-1).